The sequence spans 27 residues: Caerulein precursor fragment R1 (27 aa).

Expressed by the skin glands.

The protein resides in the secreted. Its function is as follows. Antimicrobial peptide. The sequence is that of Caerulein precursor fragment R1 from Xenopus ruwenzoriensis (Uganda clawed frog).